A 699-amino-acid polypeptide reads, in one-letter code: Elongation factor G (699 aa).

In terms of domain architecture, tr-type G spans 8 to 290; sequence NRYRNIGICA…AVIEFLPAPD (283 aa). GTP contacts are provided by residues 17–24, 88–92, and 142–145; these read AHVDAGKT, DTPGH, and NKMD.

It belongs to the TRAFAC class translation factor GTPase superfamily. Classic translation factor GTPase family. EF-G/EF-2 subfamily.

It localises to the cytoplasm. Catalyzes the GTP-dependent ribosomal translocation step during translation elongation. During this step, the ribosome changes from the pre-translocational (PRE) to the post-translocational (POST) state as the newly formed A-site-bound peptidyl-tRNA and P-site-bound deacylated tRNA move to the P and E sites, respectively. Catalyzes the coordinated movement of the two tRNA molecules, the mRNA and conformational changes in the ribosome. This is Elongation factor G from Alcanivorax borkumensis (strain ATCC 700651 / DSM 11573 / NCIMB 13689 / SK2).